The primary structure comprises 217 residues: D-methionine transport system permease protein MetI (217 aa).

At 1–19 the chain is on the periplasmic side; sequence MSEPMMWLLVRGVWETLAM. One can recognise an ABC transmembrane type-1 domain in the interval 13-204; that stretch reads VWETLAMTFV…LLVILVYLIQ (192 aa). The helical transmembrane segment at 20–40 threads the bilayer; sequence TFVSGFFGFVIGLPVGVLLYV. Topologically, residues 41–57 are cytoplasmic; it reads TRPGQIIANAKLYRTVS. Residues 58 to 78 traverse the membrane as a helical segment; it reads AIVNIFRSIPFIILLVWMIPF. Topologically, residues 79 to 80 are periplasmic; that stretch reads TR. Residues 81–101 form a helical membrane-spanning segment; sequence VIVGTSIGLQAAIVPLTVGAA. At 102-151 the chain is on the cytoplasmic side; sequence PFIARMVENALLEIPTGLIEASRAMGATPMQIVRKVLLPEALPGLVNAAT. The chain crosses the membrane as a helical span at residues 152–172; it reads ITLITLVGYSAMGGAVGAGGL. At 173–185 the chain is on the periplasmic side; that stretch reads GQIGYQYGYIGYN. The helical transmembrane segment at 186–206 threads the bilayer; the sequence is ATVMNTVLVLLVILVYLIQFA. At 207-217 the chain is on the cytoplasmic side; sequence GDRIVRAVTRK.

The protein belongs to the binding-protein-dependent transport system permease family. CysTW subfamily.

Its subcellular location is the cell inner membrane. In terms of biological role, part of the binding-protein-dependent transport system for D-methionine and the toxic methionine analog alpha-methyl-methionine. Probably responsible for the translocation of the substrate across the membrane. Functionally, (Microbial infection) Probably transports the toxic C-terminal region of CdiA from E.coli strain MHI813 across the inner membrane to the cytoplasm, where CdiA has a toxic effect. Toxin transport is strain-specific, mutations in this gene do not confer resistance to several other tested CdiA toxins. The sequence is that of D-methionine transport system permease protein MetI (metI) from Escherichia coli (strain K12).